A 500-amino-acid polypeptide reads, in one-letter code: Flt3-interacting zinc finger protein 1 (500 aa).

Position 1 is an N-acetylmethionine (Met-1). A disordered region spans residues 1–24 (MEDSSLPVVPAPIAAPGPAPSATA). Residues 9–19 (VPAPIAAPGPA) show a composition bias toward pro residues. 6 C2H2-type zinc fingers span residues 29–51 (FHCS…FARH), 57–79 (HACP…LRSH), 85–107 (YRCS…QVVH), 113–136 (YCCL…KRQH), 204–226 (FACG…WAAH), and 232–254 (FKCP…KLTH). Disordered regions lie at residues 255 to 284 (DLQG…ASEV) and 306 to 328 (KLEA…AAAE). The segment covering 256–267 (LQGSNAPPTQVW) has biased composition (polar residues). C2H2-type zinc fingers lie at residues 336–357 (YQCD…LEAH), 363–386 (YGCG…RASH), 418–440 (FGCS…VLVH), 446–468 (FPCL…RLLH), and 474–496 (FPCH…LKLH). The interval 383 to 415 (RASHGEGSGEAAPDGEGNQAAGGPGPGSSSRSK) is disordered.

In terms of assembly, interacts with FLT3 cytoplasmic catalytic domain, following receptor stimulation, in a kinase-independent manner. Does not interact with other structurally related receptor tyrosine kinases, including KIT, CSF1R and PDGFR. Interacts with NRL. In terms of tissue distribution, widely expressed. In the retina, highest expression in the ganglion cell layer.

The protein resides in the cytoplasm. It is found in the nucleus. Functionally, may be a transcriptional repressor of NRL function in photoreceptors. Does not repress CRX-mediated transactivation. This is Flt3-interacting zinc finger protein 1 (Fiz1) from Mus musculus (Mouse).